Consider the following 283-residue polypeptide: Protein canopy homolog 3 (283 aa).

The signal sequence occupies residues 1–35; the sequence is MEPLPEPTSRPRLRPRPRCLLLLPLLLLLLLLLPA. The Saposin B-type domain occupies 55 to 276; sequence SKCEVCKYVA…EGIQKASPLT (222 aa). A glycan (N-linked (GlcNAc...) asparagine) is linked at asparagine 161. A coiled-coil region spans residues 161–187; that stretch reads NETSAEVADLKKQCDVLVEEFEEVIED. Residues 223–283 are disordered; it reads KGDTAALGGK…PLTHSPPDEL (61 aa).

It belongs to the canopy family. As to quaternary structure, interacts with HSP90B1; this interaction is disrupted in the presence of ATP. Interacts with TLR1, TLR2, TLR4 and TLR9.

Its subcellular location is the endoplasmic reticulum. Toll-like receptor (TLR)-specific co-chaperone for HSP90B1. Required for proper TLR folding, except that of TLR3, and hence controls TLR exit from the endoplasmic reticulum. Consequently, required for both innate and adaptive immune responses. The sequence is that of Protein canopy homolog 3 (CNPY3) from Sus scrofa (Pig).